Here is a 1399-residue protein sequence, read N- to C-terminus: DNA-directed RNA polymerase subunit beta' (1399 aa).

The Zn(2+) site is built by Cys70, Cys72, Cys85, and Cys88. Residues Asp460, Asp462, and Asp464 each contribute to the Mg(2+) site. Residues Cys814, Cys888, Cys895, and Cys898 each contribute to the Zn(2+) site.

Belongs to the RNA polymerase beta' chain family. As to quaternary structure, the RNAP catalytic core consists of 2 alpha, 1 beta, 1 beta' and 1 omega subunit. When a sigma factor is associated with the core the holoenzyme is formed, which can initiate transcription. It depends on Mg(2+) as a cofactor. Zn(2+) serves as cofactor.

The catalysed reaction is RNA(n) + a ribonucleoside 5'-triphosphate = RNA(n+1) + diphosphate. Its function is as follows. DNA-dependent RNA polymerase catalyzes the transcription of DNA into RNA using the four ribonucleoside triphosphates as substrates. The protein is DNA-directed RNA polymerase subunit beta' of Pseudomonas savastanoi pv. phaseolicola (strain 1448A / Race 6) (Pseudomonas syringae pv. phaseolicola (strain 1448A / Race 6)).